Consider the following 70-residue polypeptide: MSFRGTVKWFSKDKGYGFITREDTNADVFVHFTDIQMEGFKTLQKGQKVEFDVVEDTKGPRAKNVRVLGE.

In terms of domain architecture, CSD spans 5–65 (GTVKWFSKDK…DTKGPRAKNV (61 aa)).

It localises to the cytoplasm. In Aquifex aeolicus (strain VF5), this protein is Cold shock-like protein (csp).